We begin with the raw amino-acid sequence, 45 residues long: Large ribosomal subunit protein bL36 (45 aa).

It belongs to the bacterial ribosomal protein bL36 family.

The sequence is that of Large ribosomal subunit protein bL36 from Psychrobacter sp. (strain PRwf-1).